The following is a 366-amino-acid chain: D-alanine--D-alanine ligase (366 aa).

The ATP-grasp domain occupies 148–357 (KMTFEQAGLA…FPELVDRLIQ (210 aa)). 184–239 (EAALGYPAFVKPANLGSSVGIAKVRSRQELEAALDNAASYDRRLVVEAGVVAREVE) provides a ligand contact to ATP. Mg(2+) is bound by residues Asp310, Glu324, and Asn326.

The protein belongs to the D-alanine--D-alanine ligase family. Mg(2+) serves as cofactor. It depends on Mn(2+) as a cofactor.

It localises to the cytoplasm. The catalysed reaction is 2 D-alanine + ATP = D-alanyl-D-alanine + ADP + phosphate + H(+). It participates in cell wall biogenesis; peptidoglycan biosynthesis. Functionally, cell wall formation. The sequence is that of D-alanine--D-alanine ligase from Nostoc punctiforme (strain ATCC 29133 / PCC 73102).